We begin with the raw amino-acid sequence, 212 residues long: MSKGFLVSLEGPEGAGKTSVLEALLPILEVKGVKVLTTREPGGVLIGEKIREVILDPSHTQMDAKTELLLYIASRRQHLVEKVLPALEAGKLVIMDRFIDSSVAYQGFGRGLDIEAIDWLNQFATDGLKPDLTLYFDIEVEEGLARIAANSDREVNRLDLEGLDLHKKVRQGYLSLLEKEGNRIVKIDASLPLEQVVETTKAVLFDGMGLAK.

Residue 11 to 18 participates in ATP binding; the sequence is GPEGAGKT.

This sequence belongs to the thymidylate kinase family.

The catalysed reaction is dTMP + ATP = dTDP + ADP. Phosphorylation of dTMP to form dTDP in both de novo and salvage pathways of dTTP synthesis. The sequence is that of Thymidylate kinase from Streptococcus pneumoniae (strain Hungary19A-6).